Reading from the N-terminus, the 244-residue chain is Cell division protein ZapD (244 aa).

The protein belongs to the ZapD family. As to quaternary structure, interacts with FtsZ.

Its subcellular location is the cytoplasm. Functionally, cell division factor that enhances FtsZ-ring assembly. Directly interacts with FtsZ and promotes bundling of FtsZ protofilaments, with a reduction in FtsZ GTPase activity. The protein is Cell division protein ZapD of Shewanella baltica (strain OS185).